The following is a 178-amino-acid chain: PRA1 family protein 2 (178 aa).

At Met-1–Leu-41 the chain is on the cytoplasmic side. A helical membrane pass occupies residues Leu-42 to Val-62. Residues Arg-63–Pro-64 are Extracellular-facing. Residues Leu-65–Ala-85 traverse the membrane as a helical segment. Over Glu-86 to Arg-96 the chain is Cytoplasmic. A helical transmembrane segment spans residues Ser-97–Gly-119. Residues Ala-120–Thr-122 lie on the Extracellular side of the membrane. Residues Phe-123 to Leu-140 traverse the membrane as a helical segment. The Cytoplasmic segment spans residues Arg-141 to Ser-178.

The protein belongs to the PRA1 family. In terms of assembly, interacts with CCR5 and GDE1. Strong expression in the brain, small intestine, lung, spleen, and pancreas as well as in tumor tissues of the breast, colon, lung and ovary, with a weaker expression in normal tissues of the same patient. High expression in neuroblastic tumors. Strongly expressed in Purkinje cells and more moderately in cells of the molecular and the granular layers in the cerebellum. Detected in neuronal cells, but not in non-neuronal cells in the cerebral cortex, hippocampus, and lateral ventricles.

It is found in the endosome membrane. In terms of biological role, may be involved in ER/Golgi transport and vesicular traffic. Plays a proapoptotic role in cerulenin-induced neuroblastoma apoptosis. This is PRA1 family protein 2 (PRAF2) from Homo sapiens (Human).